A 387-amino-acid polypeptide reads, in one-letter code: Type 2 DNA topoisomerase 6 subunit A (387 aa).

Residues 12 to 160 (EARKKALAVF…MLILSKEKGK (149 aa)) enclose the Topo IIA-type catalytic domain. The O-(5'-phospho-DNA)-tyrosine intermediate role is filled by Tyr106. The Mg(2+) site is built by Glu207 and Asp259.

Belongs to the TOP6A family. As to quaternary structure, homodimer. Heterotetramer of two Top6A and two Top6B chains. It depends on Mg(2+) as a cofactor.

The enzyme catalyses ATP-dependent breakage, passage and rejoining of double-stranded DNA.. In terms of biological role, relaxes both positive and negative superturns and exhibits a strong decatenase activity. The protein is Type 2 DNA topoisomerase 6 subunit A of Hyperthermus butylicus (strain DSM 5456 / JCM 9403 / PLM1-5).